We begin with the raw amino-acid sequence, 504 residues long: E3 ubiquitin-protein ligase dbl4 (504 aa).

The TRIAD supradomain stretch occupies residues 127–338 (HEGTCEICYD…NNWYTCNRYE (212 aa)). Residues cysteine 131, cysteine 134, cysteine 147, histidine 149, cysteine 152, cysteine 155, cysteine 173, cysteine 178, cysteine 217, cysteine 222, cysteine 244, cysteine 246, cysteine 251, cysteine 254, histidine 259, cysteine 264, cysteine 291, and cysteine 294 each contribute to the Zn(2+) site. The segment at 131–178 (CEICYDEGCLPFFSAECDHEFCLACYRQYLDSRISEGESVIQCPEESC) adopts an RING-type 1 zinc-finger fold. The segment at 197–264 (DRYHRLLDRS…GHDNHQPTIC (68 aa)) adopts an IBR-type zinc-finger fold. An RING-type 2; atypical zinc finger spans residues 291 to 320 (CPKCSTTIEKNGGCNHMTCKKCKYEFCWVC). Residue cysteine 304 is part of the active site. Zn(2+) contacts are provided by cysteine 309, cysteine 312, cysteine 317, cysteine 320, histidine 327, and cysteine 334.

The protein belongs to the RBR family.

The protein resides in the cytoplasm. It is found in the nucleus. It catalyses the reaction [E2 ubiquitin-conjugating enzyme]-S-ubiquitinyl-L-cysteine + [acceptor protein]-L-lysine = [E2 ubiquitin-conjugating enzyme]-L-cysteine + [acceptor protein]-N(6)-ubiquitinyl-L-lysine.. It functions in the pathway protein modification; protein ubiquitination. Its function is as follows. Probable ubiquitin-protein ligase involved in the degradation-related ubiquitination of histones. Contributes to the post-translational regulation of histone protein levels by polyubiquitination of excess histones for subsequent degradation. In Schizosaccharomyces pombe (strain 972 / ATCC 24843) (Fission yeast), this protein is E3 ubiquitin-protein ligase dbl4.